The primary structure comprises 159 residues: Peptide deformylase (159 aa).

Fe cation-binding residues include cysteine 88 and histidine 130. Glutamate 131 is a catalytic residue. Residue histidine 134 coordinates Fe cation.

This sequence belongs to the polypeptide deformylase family. Fe(2+) serves as cofactor.

It carries out the reaction N-terminal N-formyl-L-methionyl-[peptide] + H2O = N-terminal L-methionyl-[peptide] + formate. Removes the formyl group from the N-terminal Met of newly synthesized proteins. Requires at least a dipeptide for an efficient rate of reaction. N-terminal L-methionine is a prerequisite for activity but the enzyme has broad specificity at other positions. This chain is Peptide deformylase, found in Thermoanaerobacter pseudethanolicus (strain ATCC 33223 / 39E) (Clostridium thermohydrosulfuricum).